Consider the following 232-residue polypeptide: tRNA1(Val) (adenine(37)-N6)-methyltransferase (232 aa).

It belongs to the methyltransferase superfamily. tRNA (adenine-N(6)-)-methyltransferase family.

It is found in the cytoplasm. It carries out the reaction adenosine(37) in tRNA1(Val) + S-adenosyl-L-methionine = N(6)-methyladenosine(37) in tRNA1(Val) + S-adenosyl-L-homocysteine + H(+). In terms of biological role, specifically methylates the adenine in position 37 of tRNA(1)(Val) (anticodon cmo5UAC). In Pseudoalteromonas translucida (strain TAC 125), this protein is tRNA1(Val) (adenine(37)-N6)-methyltransferase.